Here is a 292-residue protein sequence, read N- to C-terminus: Inhibitory synaptic factor 1 (292 aa).

Disordered stretches follow at residues 1–25 (MNIR…RERI), 122–186 (SDSV…ERVR), and 198–292 (CDDE…KGKN). Residues 23–63 (ERIRQRMKMVIGQLEDILRELKEVAKELREVVSQIDKLTSD) adopt a coiled-coil conformation. Acidic residues predominate over residues 198–214 (CDDEEGDGEEEAAEEEG). The span at 263 to 285 (RNSSTQTVSDKSTQTVLPYTATR) shows a compositional bias: polar residues.

This sequence belongs to the INSYN1 family. In terms of assembly, interacts with GPHN.

The protein localises to the postsynaptic density. In terms of biological role, component of the protein machinery at the inhibitory synapses, probably acting as a scaffold. Inhibitory synapses dampen neuronal activity through postsynaptic hyperpolarization. This synaptic inhibition is fundamental for the functioning of the central nervous system, shaping and orchestrating the flow of information through neuronal networks to generate a precise neural code. The protein is Inhibitory synaptic factor 1 of Bos taurus (Bovine).